A 130-amino-acid chain; its full sequence is UPF0225 protein DR_0483 (130 aa).

It belongs to the UPF0225 family.

In Deinococcus radiodurans (strain ATCC 13939 / DSM 20539 / JCM 16871 / CCUG 27074 / LMG 4051 / NBRC 15346 / NCIMB 9279 / VKM B-1422 / R1), this protein is UPF0225 protein DR_0483.